The chain runs to 263 residues: MADWLIGIIMGAVEGLTEFLPVSSTGHMILTGHLLGFDDERAKVFEVVIQLGSILAVVVIFWKRLWSLVGIGKVTDGPSLNLLHIIIGMIPAGVLGVLFHSAIKEVLFGPGPVVISLVAGGILMIVAEKFSKPSTARTLDEITYKQAFTIGMFQCLALWPGFSRSGSTISGGLLARVSHTAAAEYTFILAVPMMVAASGLDLIKSWDILSAADIPLFATGFITAFVVAMLAIVSFLKLLSRVKLTPFAYYRFILAAVFYFFIM.

8 consecutive transmembrane segments (helical) span residues 15–37 (GLTE…LLGF), 42–62 (AKVF…VIFW), 83–103 (LHII…HSAI), 106–126 (VLFG…LMIV), 142–162 (ITYK…WPGF), 183–203 (AEYT…LDLI), 216–236 (LFAT…VSFL), and 242–262 (VKLT…YFFI).

The protein belongs to the UppP family.

Its subcellular location is the cell membrane. The catalysed reaction is di-trans,octa-cis-undecaprenyl diphosphate + H2O = di-trans,octa-cis-undecaprenyl phosphate + phosphate + H(+). Functionally, catalyzes the dephosphorylation of undecaprenyl diphosphate (UPP). Confers resistance to bacitracin. This is Undecaprenyl-diphosphatase 2 from Bacillus cereus (strain ATCC 10987 / NRS 248).